We begin with the raw amino-acid sequence, 908 residues long: Glutamate receptor ionotropic, kainate 2 (908 aa).

An N-terminal signal peptide occupies residues 1 to 31; sequence MKIISPVLSNLVFSRSIKVLLCLLWIGYSQG. Residues 32-561 are Extracellular-facing; the sequence is TTHVLRFGGI…VFSFLNPLSP (530 aa). N-linked (GlcNAc...) asparagine glycosylation is found at N67, N73, N275, N378, N412, N423, and N430. C96 and C347 form a disulfide bridge. P516, A518, and R523 together coordinate L-glutamate. N546 carries an N-linked (GlcNAc...) asparagine glycan. Residues 562-582 form a helical membrane-spanning segment; it reads DIWMYILLAYLGVSCVLFVIA. Residues 583 to 638 lie on the Cytoplasmic side of the membrane; that stretch reads RFSPYEWYNPHPCNPDSDVVENNFTLLNSFWFGVGALMQQGSELMPKALSTRIVGG. The chain crosses the membrane as a helical span at residues 639–659; sequence IWWFFTLIIISSYTANLAAFL. Topologically, residues 660-819 are extracellular; sequence TVERMESPID…KEASALGVQN (160 aa). A689, T690, and E738 together coordinate L-glutamate. Cysteines 750 and 804 form a disulfide. Residue N751 is glycosylated (N-linked (GlcNAc...) asparagine). The chain crosses the membrane as a helical span at residues 820 to 840; sequence IGGIFIVLAAGLVLSVFVAVG. Residues 841 to 908 lie on the Cytoplasmic side of the membrane; it reads EFLYKSKKNA…RRLPGKETMA (68 aa). Phosphoserine; by PKC is present on residues S846 and S868. K886 is covalently cross-linked (Glycyl lysine isopeptide (Lys-Gly) (interchain with G-Cter in SUMO1)).

It belongs to the glutamate-gated ion channel (TC 1.A.10.1) family. GRIK2 subfamily. Homotetramer and heterotetramer with GRIK5. Tetramers may be formed by the dimerization of dimers. Assembles into a kainate-gated homomeric channel that does not bind AMPA. Can form functional heteromeric receptors with GRIK3. Forms a heteromeric complex with GRIK4 and GRIK5. Interacts with DLG4. Interacts (via C-terminus) with KLHL17 (via kelch repeats); the interaction targets GRIK2 for degradation via ubiquitin-proteasome pathway. Interacts with NETO2. Sumoylation mediates kainate receptor-mediated endocytosis and regulates synaptic transmission. Sumoylation is enhanced by PIAS3 and desumoylated by SENP1. In terms of processing, ubiquitinated. Ubiquitination regulates the GRIK2 levels at the synapse by leading kainate receptor degradation through proteasome. Post-translationally, phosphorylated by PKC at Ser-868 upon agonist activation, this directly enhance sumoylation. In terms of tissue distribution, expressed in the hippocampal mossy fiber synapses (at protein level). Most abundant in the cerebellum and the hypothalamus. Expressed in a proportion of dorsal root ganglion (DRG) neurons (13.6%); predominantly small diameter DRG neurons (75%) with the remainder expressed in medium diameter DRG neurons.

The protein localises to the cell membrane. It is found in the postsynaptic cell membrane. The catalysed reaction is Ca(2+)(in) = Ca(2+)(out). The enzyme catalyses Na(+)(in) = Na(+)(out). Cold receptor activity activated by temperatures between 10-19 degrees Celsius. In terms of biological role, ionotropic glutamate receptor that functions as a cation-permeable ligand-gated ion channel, gated by L-glutamate and the glutamatergic agonist kainic acid. L-glutamate acts as an excitatory neurotransmitter at many synapses in the central nervous system. Binding of the excitatory neurotransmitter L-glutamate induces a conformation change, leading to the opening of the cation channel, and thereby converts the chemical signal to an electrical impulse. The receptor then desensitizes rapidly and enters a transient inactive state, characterized by the presence of bound agonist. Modulates cell surface expression of NETO2. In association with GRIK3, involved in presynaptic facilitation of glutamate release at hippocampal mossy fiber synapses. Independent of its ionotropic glutamate receptor activity, acts as a thermoreceptor conferring sensitivity to cold temperatures. Functions in dorsal root ganglion neurons. Functionally, ionotropic glutamate receptor that functions as a cation-permeable ligand-gated ion channel, gated by L-glutamate and the glutamatergic agonist kainic acid. This is Glutamate receptor ionotropic, kainate 2 (Grik2) from Mus musculus (Mouse).